The following is a 227-amino-acid chain: Cytochrome c oxidase subunit 2 (227 aa).

Residues 1 to 14 (MAYPLQLGFQDATS) are Mitochondrial intermembrane-facing. Residues 15-45 (PIMEELLHFHDHTLMIVFLISSLVLYIISLM) form a helical membrane-spanning segment. Residues 46-59 (LTTKLTHTSTMDAQ) are Mitochondrial matrix-facing. Residues 60 to 87 (EVETIWTILPAIILILIALPSLRILYMM) form a helical membrane-spanning segment. Over 88–227 (DEINNPSLTI…HFEKWSTSML (140 aa)) the chain is Mitochondrial intermembrane. Cu cation-binding residues include His-161, Cys-196, Glu-198, Cys-200, His-204, and Met-207. Glu-198 contacts Mg(2+).

Belongs to the cytochrome c oxidase subunit 2 family. Component of the cytochrome c oxidase (complex IV, CIV), a multisubunit enzyme composed of 14 subunits. The complex is composed of a catalytic core of 3 subunits MT-CO1, MT-CO2 and MT-CO3, encoded in the mitochondrial DNA, and 11 supernumerary subunits COX4I, COX5A, COX5B, COX6A, COX6B, COX6C, COX7A, COX7B, COX7C, COX8 and NDUFA4, which are encoded in the nuclear genome. The complex exists as a monomer or a dimer and forms supercomplexes (SCs) in the inner mitochondrial membrane with NADH-ubiquinone oxidoreductase (complex I, CI) and ubiquinol-cytochrome c oxidoreductase (cytochrome b-c1 complex, complex III, CIII), resulting in different assemblies (supercomplex SCI(1)III(2)IV(1) and megacomplex MCI(2)III(2)IV(2)). Found in a complex with TMEM177, COA6, COX18, COX20, SCO1 and SCO2. Interacts with TMEM177 in a COX20-dependent manner. Interacts with COX20. Interacts with COX16. Cu cation is required as a cofactor.

It localises to the mitochondrion inner membrane. The enzyme catalyses 4 Fe(II)-[cytochrome c] + O2 + 8 H(+)(in) = 4 Fe(III)-[cytochrome c] + 2 H2O + 4 H(+)(out). In terms of biological role, component of the cytochrome c oxidase, the last enzyme in the mitochondrial electron transport chain which drives oxidative phosphorylation. The respiratory chain contains 3 multisubunit complexes succinate dehydrogenase (complex II, CII), ubiquinol-cytochrome c oxidoreductase (cytochrome b-c1 complex, complex III, CIII) and cytochrome c oxidase (complex IV, CIV), that cooperate to transfer electrons derived from NADH and succinate to molecular oxygen, creating an electrochemical gradient over the inner membrane that drives transmembrane transport and the ATP synthase. Cytochrome c oxidase is the component of the respiratory chain that catalyzes the reduction of oxygen to water. Electrons originating from reduced cytochrome c in the intermembrane space (IMS) are transferred via the dinuclear copper A center (CU(A)) of subunit 2 and heme A of subunit 1 to the active site in subunit 1, a binuclear center (BNC) formed by heme A3 and copper B (CU(B)). The BNC reduces molecular oxygen to 2 water molecules using 4 electrons from cytochrome c in the IMS and 4 protons from the mitochondrial matrix. The sequence is that of Cytochrome c oxidase subunit 2 (MT-CO2) from Rhinoceros unicornis (Greater Indian rhinoceros).